Consider the following 206-residue polypeptide: Large ribosomal subunit protein uL4 (206 aa).

Positions 44-80 (KRAGTHSVKTRSTISGGGAKPWRQKGTGRARSGSNRS) are disordered.

Belongs to the universal ribosomal protein uL4 family. In terms of assembly, part of the 50S ribosomal subunit.

One of the primary rRNA binding proteins, this protein initially binds near the 5'-end of the 23S rRNA. It is important during the early stages of 50S assembly. It makes multiple contacts with different domains of the 23S rRNA in the assembled 50S subunit and ribosome. Its function is as follows. Forms part of the polypeptide exit tunnel. The protein is Large ribosomal subunit protein uL4 of Oleidesulfovibrio alaskensis (strain ATCC BAA-1058 / DSM 17464 / G20) (Desulfovibrio alaskensis).